The sequence spans 315 residues: Acetaldehyde dehydrogenase (315 aa).

Residue 13 to 16 participates in NAD(+) binding; that stretch reads SGNI. Catalysis depends on Cys-131, which acts as the Acyl-thioester intermediate. Residues 163 to 171 and Asn-290 each bind NAD(+); that span reads SAGPGTRAN.

This sequence belongs to the acetaldehyde dehydrogenase family.

The catalysed reaction is acetaldehyde + NAD(+) + CoA = acetyl-CoA + NADH + H(+). The polypeptide is Acetaldehyde dehydrogenase (Xanthobacter autotrophicus (strain ATCC BAA-1158 / Py2)).